Here is a 44-residue protein sequence, read N- to C-terminus: MDGTAFFFTIFVWFLLISVTGYSIYVGFGPTSSALRDPFEEHED.

A helical transmembrane segment spans residues 6-26 (FFFTIFVWFLLISVTGYSIYV).

This sequence belongs to the PsbN family.

It is found in the plastid. The protein resides in the chloroplast thylakoid membrane. In terms of biological role, may play a role in photosystem I and II biogenesis. This is Protein PsbN from Bigelowiella natans (Pedinomonas minutissima).